Consider the following 208-residue polypeptide: Uracil phosphoribosyltransferase (208 aa).

Residues Arg78, Arg103, and 130 to 138 (DPMLATGGT) each bind 5-phospho-alpha-D-ribose 1-diphosphate. Uracil-binding positions include Ile193 and 198–200 (GDA). Asp199 provides a ligand contact to 5-phospho-alpha-D-ribose 1-diphosphate.

It belongs to the UPRTase family. Requires Mg(2+) as cofactor.

The enzyme catalyses UMP + diphosphate = 5-phospho-alpha-D-ribose 1-diphosphate + uracil. It participates in pyrimidine metabolism; UMP biosynthesis via salvage pathway; UMP from uracil: step 1/1. Its activity is regulated as follows. Allosterically activated by GTP. In terms of biological role, catalyzes the conversion of uracil and 5-phospho-alpha-D-ribose 1-diphosphate (PRPP) to UMP and diphosphate. The chain is Uracil phosphoribosyltransferase from Solidesulfovibrio magneticus (strain ATCC 700980 / DSM 13731 / RS-1) (Desulfovibrio magneticus).